Here is a 349-residue protein sequence, read N- to C-terminus: N-acetyltaurine hydrolase (349 aa).

Residues histidine 26, histidine 28, glutamate 169, histidine 201, histidine 230, and aspartate 298 each coordinate a divalent metal cation.

Belongs to the metallo-dependent hydrolases superfamily. Phosphotriesterase family. A divalent metal cation is required as a cofactor.

It localises to the cytoplasm. The protein localises to the cytosol. It carries out the reaction N-acetyltaurine + H2O = taurine + acetate. The catalysed reaction is N-propanoyltaurine + H2O = propanoate + taurine. It catalyses the reaction N-acetyl-L-methionine + H2O = L-methionine + acetate. The enzyme catalyses N-acetyl-L-isoleucine + H2O = L-isoleucine + acetate. It carries out the reaction N-acetyl-L-leucine + H2O = L-leucine + acetate. The catalysed reaction is N-acetyl-L-valine + H2O = L-valine + acetate. N-acetyltaurine hydrolase that regulates feeding by catalyzing the hydrolysis of N-acetyltaurine into taurine and acetate. N-acetyltaurine has anorexigenic and anti-obesity effects that are dependent on GFRAL receptor and GDF15. PTER also acts on other N-acetyl amino acids (Met, Ile, Leu, Val) and N-propionyltaurine, but at lower rates. The chain is N-acetyltaurine hydrolase (PTER) from Bos taurus (Bovine).